The primary structure comprises 309 residues: Homoserine kinase (309 aa).

Pro-91–Cys-101 is a binding site for ATP.

Belongs to the GHMP kinase family. Homoserine kinase subfamily.

Its subcellular location is the cytoplasm. It catalyses the reaction L-homoserine + ATP = O-phospho-L-homoserine + ADP + H(+). Its pathway is amino-acid biosynthesis; L-threonine biosynthesis; L-threonine from L-aspartate: step 4/5. Functionally, catalyzes the ATP-dependent phosphorylation of L-homoserine to L-homoserine phosphate. The protein is Homoserine kinase of Buchnera aphidicola subsp. Acyrthosiphon pisum (strain APS) (Acyrthosiphon pisum symbiotic bacterium).